Reading from the N-terminus, the 478-residue chain is Early growth response protein 4 (478 aa).

The tract at residues 15–37 (SKPTEGCAHTSPELPRLPARDAP) is disordered. C2H2-type zinc fingers lie at residues 372–396 (FACPVESCVRTFARSDELNRHLRIH), 402–424 (FQCRICLRNFSRSDHLTTHVRTH), and 430–452 (FACDVCGRRFARSDEKKRHSKVH).

Belongs to the EGR C2H2-type zinc-finger protein family.

It localises to the nucleus. Its function is as follows. Transcriptional regulator. Recognizes and binds to the DNA sequence 5'-GCGGGGGCG-3' (GSG). Activates the transcription of target genes whose products are required for mitogenesis and differentiation. This is Early growth response protein 4 (Egr4) from Rattus norvegicus (Rat).